The following is a 242-amino-acid chain: Large ribosomal subunit protein uL1 (242 aa).

The protein belongs to the universal ribosomal protein uL1 family. As to quaternary structure, part of the 50S ribosomal subunit.

Its function is as follows. Binds directly to 23S rRNA. The L1 stalk is quite mobile in the ribosome, and is involved in E site tRNA release. In terms of biological role, protein L1 is also a translational repressor protein, it controls the translation of the L11 operon by binding to its mRNA. The polypeptide is Large ribosomal subunit protein uL1 (Dictyoglomus turgidum (strain DSM 6724 / Z-1310)).